Here is a 62-residue protein sequence, read N- to C-terminus: Insect toxin BsIT4 (62 aa).

An LCN-type CS-alpha/beta domain is found at 1–62 (DGYIKGNKGC…WLYAATNTCG (62 aa)). 4 disulfides stabilise this stretch: cysteine 10/cysteine 61, cysteine 14/cysteine 35, cysteine 21/cysteine 42, and cysteine 25/cysteine 44.

This sequence belongs to the long (4 C-C) scorpion toxin superfamily. Sodium channel inhibitor family. Beta subfamily. As to expression, expressed by the venom gland.

It is found in the secreted. Functionally, depressant insect beta-toxins cause a transient contraction paralysis followed by a slow flaccid paralysis. They bind voltage-independently at site-4 of sodium channels (Nav) and shift the voltage of activation toward more negative potentials thereby affecting sodium channel activation and promoting spontaneous and repetitive firing. This toxin is active only on insects. This is Insect toxin BsIT4 from Hottentotta tamulus sindicus (Scorpion).